Here is a 346-residue protein sequence, read N- to C-terminus: Peripherin-2 (346 aa).

Residues 1-24 (MALLKVKFDQKKRVKLAQGLWLMN) lie on the Cytoplasmic side of the membrane. The helical transmembrane segment at 25–43 (WLSVLAGIVLFSLGLFLKI) threads the bilayer. Residues 44 to 61 (ELRKRSDVMDNSESHFVP) lie on the Lumenal side of the membrane. The chain crosses the membrane as a helical span at residues 62 to 80 (NSLIGVGVLSCVFNSLAGK). The Cytoplasmic segment spans residues 81 to 99 (ICYDALDPAKYAKWKPWLK). The chain crosses the membrane as a helical span at residues 100–123 (LYLAVCVFFNVILFLVALCCFLLR). Residues 124-264 (GSLESTLAYG…LNYYSSLMNS (141 aa)) are Lumenal-facing. N229 carries an N-linked (GlcNAc...) asparagine glycan. Residues 265–290 (MGVVTLLIWLFEVSITAGLRFLHTAL) form a helical membrane-spanning segment. Over 291–346 (ESVSNPEDPECESEGWLLENSVSETWKAFLESFKKLGKSNQVEAEAADAGQAPEAG) the chain is Cytoplasmic. The interaction with MREG stretch occupies residues 341-346 (QAPEAG).

The protein belongs to the PRPH2/ROM1 family. As to quaternary structure, homodimer; disulfide-linked. Forms a homotetramer. Forms a heterotetramer with ROM1. Homotetramer and heterotetramer core complexes go on to form higher order complexes by formation of intermolecular disulfide bonds. Interacts with MREG. Interacts with STX3. Interacts with SNAP25. In terms of tissue distribution, retina (photoreceptor). In rim region of ROS (rod outer segment) disks.

It localises to the membrane. Its subcellular location is the cell projection. The protein resides in the cilium. The protein localises to the photoreceptor outer segment. It is found in the photoreceptor inner segment. In terms of biological role, essential for retina photoreceptor outer segment disk morphogenesis, may also play a role with ROM1 in the maintenance of outer segment disk structure. Required for the maintenance of retinal outer nuclear layer thickness. Required for the correct development and organization of the photoreceptor inner segment. This is Peripherin-2 (Prph2) from Rattus norvegicus (Rat).